We begin with the raw amino-acid sequence, 226 residues long: MDELKKLAGVYAAGFVEDGMVVGLGTGSTAYFFVEEIGRRIKEEGLSVVGVTTSSQTTKQAEGLGIPLKSVDDIDSIDVTVDGADEVDPQLNGIKGGGGALLMEKIVATPTKKYIWVVDESKMVDQLGAFKLPVEVVQYGADRLYLDFESKGYKPSFRVTEQGDRFVTDMKNFIIDLDLGKINNPVALGDELKAMTGVVEHGLFNGMVNKVIVAGKDGVKIVEVKD.

Residues 26-29 (TGST), 82-85 (DGAD), and 95-98 (KGGG) contribute to the substrate site. E104 acts as the Proton acceptor in catalysis. K122 serves as a coordination point for substrate.

The protein belongs to the ribose 5-phosphate isomerase family. As to quaternary structure, homodimer.

The catalysed reaction is aldehydo-D-ribose 5-phosphate = D-ribulose 5-phosphate. It participates in carbohydrate degradation; pentose phosphate pathway; D-ribose 5-phosphate from D-ribulose 5-phosphate (non-oxidative stage): step 1/1. Functionally, catalyzes the reversible conversion of ribose-5-phosphate to ribulose 5-phosphate. The sequence is that of Ribose-5-phosphate isomerase A from Streptococcus thermophilus (strain CNRZ 1066).